The primary structure comprises 586 residues: Arginine--tRNA ligase (586 aa).

A 'HIGH' region motif is present at residues 133–143 (ANPTGPLNIVS).

Belongs to the class-I aminoacyl-tRNA synthetase family. Monomer.

The protein localises to the cytoplasm. It carries out the reaction tRNA(Arg) + L-arginine + ATP = L-arginyl-tRNA(Arg) + AMP + diphosphate. This Leptospira interrogans serogroup Icterohaemorrhagiae serovar Lai (strain 56601) protein is Arginine--tRNA ligase.